A 383-amino-acid chain; its full sequence is DNA-directed RNA polymerase subunit alpha (383 aa).

Residues 1–240 (MEKKTGLIQF…NLFHQISPPL (240 aa)) form an alpha N-terminal domain (alpha-NTD) region. Residues 306 to 383 (IDKQMNDSVN…RFNMELLPTK (78 aa)) form an alpha C-terminal domain (alpha-CTD) region.

This sequence belongs to the RNA polymerase alpha chain family. In plastids the minimal PEP RNA polymerase catalytic core is composed of four subunits: alpha, beta, beta', and beta''. When a (nuclear-encoded) sigma factor is associated with the core the holoenzyme is formed, which can initiate transcription.

It localises to the plastid. The protein resides in the chloroplast. It catalyses the reaction RNA(n) + a ribonucleoside 5'-triphosphate = RNA(n+1) + diphosphate. Its function is as follows. DNA-dependent RNA polymerase catalyzes the transcription of DNA into RNA using the four ribonucleoside triphosphates as substrates. The protein is DNA-directed RNA polymerase subunit alpha of Staurastrum punctulatum (Green alga).